We begin with the raw amino-acid sequence, 71 residues long: Small ribosomal subunit protein bS21 (71 aa).

Belongs to the bacterial ribosomal protein bS21 family.

The protein is Small ribosomal subunit protein bS21 of Dichelobacter nodosus (strain VCS1703A).